The following is a 352-amino-acid chain: Ion-translocating oxidoreductase complex subunit D (352 aa).

5 consecutive transmembrane segments (helical) span residues Ile-20–Gly-40, Gly-42–Leu-62, Ala-78–Ala-109, Pro-123–Leu-143, and Ile-148–Thr-168. An FMN phosphoryl threonine modification is found at Thr-187. A run of 5 helical transmembrane segments spans residues Leu-215–Leu-235, Trp-242–Phe-262, Leu-267–Leu-287, Leu-301–Pro-321, and Asp-322–Thr-342.

The protein belongs to the NqrB/RnfD family. As to quaternary structure, the complex is composed of six subunits: RsxA, RsxB, RsxC, RsxD, RsxE and RsxG. The cofactor is FMN.

Its subcellular location is the cell inner membrane. Functionally, part of a membrane-bound complex that couples electron transfer with translocation of ions across the membrane. Required to maintain the reduced state of SoxR. The polypeptide is Ion-translocating oxidoreductase complex subunit D (Escherichia coli (strain SMS-3-5 / SECEC)).